A 246-amino-acid polypeptide reads, in one-letter code: Phosphatidylserine decarboxylase proenzyme (246 aa).

S204 functions as the Schiff-base intermediate with substrate; via pyruvic acid in the catalytic mechanism. A Pyruvic acid (Ser); by autocatalysis modification is found at S204.

It belongs to the phosphatidylserine decarboxylase family. PSD-A subfamily. Heterodimer of a large membrane-associated beta subunit and a small pyruvoyl-containing alpha subunit. It depends on pyruvate as a cofactor. Post-translationally, is synthesized initially as an inactive proenzyme. Formation of the active enzyme involves a self-maturation process in which the active site pyruvoyl group is generated from an internal serine residue via an autocatalytic post-translational modification. Two non-identical subunits are generated from the proenzyme in this reaction, and the pyruvate is formed at the N-terminus of the alpha chain, which is derived from the carboxyl end of the proenzyme. The post-translation cleavage follows an unusual pathway, termed non-hydrolytic serinolysis, in which the side chain hydroxyl group of the serine supplies its oxygen atom to form the C-terminus of the beta chain, while the remainder of the serine residue undergoes an oxidative deamination to produce ammonia and the pyruvoyl prosthetic group on the alpha chain.

Its subcellular location is the cell membrane. It catalyses the reaction a 1,2-diacyl-sn-glycero-3-phospho-L-serine + H(+) = a 1,2-diacyl-sn-glycero-3-phosphoethanolamine + CO2. It functions in the pathway phospholipid metabolism; phosphatidylethanolamine biosynthesis; phosphatidylethanolamine from CDP-diacylglycerol: step 2/2. In terms of biological role, catalyzes the formation of phosphatidylethanolamine (PtdEtn) from phosphatidylserine (PtdSer). In Zymomonas mobilis subsp. mobilis (strain ATCC 31821 / ZM4 / CP4), this protein is Phosphatidylserine decarboxylase proenzyme.